Consider the following 44-residue polypeptide: Putative keratin-associated protein 20-4 (44 aa).

This sequence belongs to the KRTAP type 20 family. In terms of assembly, interacts with hair keratins.

In the hair cortex, hair keratin intermediate filaments are embedded in an interfilamentous matrix, consisting of hair keratin-associated proteins (KRTAP), which are essential for the formation of a rigid and resistant hair shaft through their extensive disulfide bond cross-linking with abundant cysteine residues of hair keratins. The matrix proteins include the high-sulfur and high-glycine-tyrosine keratins. This chain is Putative keratin-associated protein 20-4 (KRTAP20-4), found in Homo sapiens (Human).